The following is a 481-amino-acid chain: RAC-beta serine/threonine-protein kinase (481 aa).

Met-1 carries the N-acetylmethionine modification. Residues 5–108 (SVIKEGWLHK…WMRAIQMVAN (104 aa)) form the PH domain. Ser-34 carries the post-translational modification Phosphoserine. Cys-60 and Cys-77 are joined by a disulfide. Position 126 is a phosphoserine (Ser-126). 2 O-linked (GlcNAc) serine glycosylation sites follow: Ser-128 and Ser-131. Residues 152-409 (FDYLKLLGKG…AKEVMEHRFF (258 aa)) enclose the Protein kinase domain. ATP is bound by residues 158–166 (LGKGTFGKV) and Lys-181. Asp-275 acts as the Proton acceptor in catalysis. Positions 280 and 293 each coordinate Mn(2+). Cys-297 and Cys-311 are oxidised to a cystine. Thr-306 is a glycosylation site (O-linked (GlcNAc) threonine). Thr-309 is subject to Phosphothreonine; by PDPK1. A glycan (O-linked (GlcNAc) threonine) is linked at Thr-313. In terms of domain architecture, AGC-kinase C-terminal spans 410 to 481 (LSINWQDVVQ…QFSYSASIRE (72 aa)). Ser-447 is subject to Phosphoserine. The residue at position 451 (Thr-451) is a Phosphothreonine. Residues Ser-474 and Ser-478 each carry the phosphoserine modification. Ser-474 is a glycosylation site (O-linked (GlcNAc) serine; alternate).

This sequence belongs to the protein kinase superfamily. AGC Ser/Thr protein kinase family. RAC subfamily. In terms of assembly, interacts with BTBD10. Interacts with KCTD20. Interacts (via PH domain) with MTCP1, TCL1A and TCL1B; this interaction may facilitate AKT2 oligomerization and phosphorylation, hence increasing kinase activity. Interacts with PHB2; this interaction may be important for myogenic differentiation. Interacts (when phosphorylated) with CLIP3/ClipR-59; this interaction promotes AKT2 recruitment to the plasma membrane. Interacts with WDFY2/ProF (via WD repeats 1-3). Post-translationally, phosphorylation on Thr-309 and Ser-474 is required for full activity. Phosphorylation of the activation loop at Thr-309 by PDPK1/PDK1 is a prerequisite for full activation. Phosphorylated and activated by PDPK1/PDK1 in the presence of phosphatidylinositol 3,4,5-trisphosphate. Phosphorylation by mTORC2 in response to growth factors plays a key role in AKT1 activation: mTORC2 phosphorylates different sites depending on the context, such as Ser-474 or Ser-478, thereby facilitating subsequent phosphorylation of the activation loop by PDPK1/PDK1. In terms of processing, ubiquitinated; undergoes both 'Lys-48'- and 'Lys-63'-linked polyubiquitination. TRAF6 catalyzes 'Lys-63'-linked AKT2 ubiquitination; this modification may be important for AKT2 recruitment to the plasma membrane and for AKT2 activating phosphorylation. When phosphorylated, undergoes 'Lys-48'-polyubiquitination catalyzed by TTC3 in the nucleus, leading to its degradation by the proteasome. O-GlcNAcylation at Thr-306 and Thr-313 inhibits activating phosphorylation at Thr-309 via the disruption of the interaction between AKT and PDPK1/PDK1. Widely expressed. Expressed in myoblasts.

Its subcellular location is the cytoplasm. It localises to the nucleus. The protein localises to the cell membrane. It is found in the early endosome. The catalysed reaction is L-seryl-[protein] + ATP = O-phospho-L-seryl-[protein] + ADP + H(+). It carries out the reaction L-threonyl-[protein] + ATP = O-phospho-L-threonyl-[protein] + ADP + H(+). With respect to regulation, phosphorylation at Thr-309 (in the kinase domain) and Ser-474 (in the C-terminal regulatory region) is required for full activation. In adipocytes and hepatocytes, the activation is induced by insulin. Aminofurazans, such as 4-[2-(4-amino-2,5-dihydro-1,2,5-oxadiazol-3-yl)-6-{[(1S)-3-amino-1-phenylpropyl]oxy}-1-ethyl-1H-imidazo[4,5-c]pyridin-4-yl]-2-methylbut-3-yn-2-ol (compound 32), are potent AKT2 inhibitors. AKT2 phosphorylation of PKP1 is induced by insulin. Serine/threonine kinase closely related to AKT1 and AKT3. All 3 enzymes, AKT1, AKT2 and AKT3, are collectively known as AKT kinase. AKT regulates many processes including metabolism, proliferation, cell survival, growth and angiogenesis, through the phosphorylation of a range of downstream substrates. Over 100 substrates have been reported so far, although for most of them, the precise AKT kinase catalyzing the reaction was not specified. AKT regulates glucose uptake by mediating insulin-induced translocation of the SLC2A4/GLUT4 glucose transporter to the cell surface. Phosphorylation of PTPN1 at 'Ser-50' negatively modulates its phosphatase activity preventing dephosphorylation of the insulin receptor and the attenuation of insulin signaling. Phosphorylation of TBC1D4 triggers the binding of this effector to inhibitory 14-3-3 proteins, which is required for insulin-stimulated glucose transport. AKT also regulates the storage of glucose in the form of glycogen by phosphorylating GSK3A at 'Ser-21' and GSK3B at 'Ser-9', resulting in inhibition of its kinase activity. Phosphorylation of GSK3 isoforms by AKT is also thought to be one mechanism by which cell proliferation is driven. AKT also regulates cell survival via the phosphorylation of MAP3K5 (apoptosis signal-related kinase). Phosphorylation of 'Ser-83' decreases MAP3K5 kinase activity stimulated by oxidative stress and thereby prevents apoptosis. AKT mediates insulin-stimulated protein synthesis by phosphorylating TSC2 at 'Ser-939' and 'Thr-1462', thereby activating mTORC1 signaling and leading to both phosphorylation of 4E-BP1 and in activation of RPS6KB1. AKT is involved in the phosphorylation of members of the FOXO factors (Forkhead family of transcription factors), leading to binding of 14-3-3 proteins and cytoplasmic localization. In particular, FOXO1 is phosphorylated at 'Thr-24', 'Ser-256' and 'Ser-319'. FOXO3 and FOXO4 are phosphorylated on equivalent sites. AKT has an important role in the regulation of NF-kappa-B-dependent gene transcription and positively regulates the activity of CREB1 (cyclic AMP (cAMP)-response element binding protein). The phosphorylation of CREB1 induces the binding of accessory proteins that are necessary for the transcription of pro-survival genes such as BCL2 and MCL1. AKT phosphorylates 'Ser-454' on ATP citrate lyase (ACLY), thereby potentially regulating ACLY activity and fatty acid synthesis. Activates the 3B isoform of cyclic nucleotide phosphodiesterase (PDE3B) via phosphorylation of 'Ser-273', resulting in reduced cyclic AMP levels and inhibition of lipolysis. Phosphorylates PIKFYVE on 'Ser-318', which results in increased PI(3)P-5 activity. The Rho GTPase-activating protein DLC1 is another substrate and its phosphorylation is implicated in the regulation cell proliferation and cell growth. AKT plays a role as key modulator of the AKT-mTOR signaling pathway controlling the tempo of the process of newborn neurons integration during adult neurogenesis, including correct neuron positioning, dendritic development and synapse formation. Signals downstream of phosphatidylinositol 3-kinase (PI(3)K) to mediate the effects of various growth factors such as platelet-derived growth factor (PDGF), epidermal growth factor (EGF), insulin and insulin-like growth factor 1 (IGF1). AKT mediates the antiapoptotic effects of IGF1. Essential for the SPATA13-mediated regulation of cell migration and adhesion assembly and disassembly. May be involved in the regulation of the placental development. In response to lysophosphatidic acid stimulation, inhibits the ciliogenesis cascade. In this context, phosphorylates WDR44, hence stabilizing its interaction with Rab11 and preventing the formation of the ciliogenic Rab11-FIP3-RAB3IP complex. Also phosphorylates RAB3IP/Rabin8, thus may affect RAB3IP guanine nucleotide exchange factor (GEF) activity toward Rab8, which is important for cilia growth. Phosphorylates PKP1, facilitating its interaction with YWHAG and translocation to the nucleus, ultimately resulting in a reduction in keratinocyte intercellular adhesion. Phosphorylation of PKP1 increases PKP1 protein stability, translocation to the cytoplasm away from desmosome plaques and PKP1-driven cap-dependent translation. Its function is as follows. Several AKT2-specific substrates have been identified, including ANKRD2, C2CD5, CLK2 and PITX2. May play a role in myoblast differentiation. In this context, may act through PITX2 phosphorylation. Unphosphorylated PITX2 associates with an ELAVL1/HuR-containing complex, which stabilizes CCND1 cyclin mRNA, ensuring cell proliferation. Phosphorylation by AKT2 impairs this association, leading to CCND1 mRNA destabilization and progression towards differentiation. Also involved in the negative regulation of myogenesis in response to stress conditions. In this context, acts by phosphorylating ANKRD2. May also be a key regulator of glucose uptake. Regulates insulin-stimulated glucose transport by the increase of glucose transporter GLUT4 translocation from intracellular stores to the plasma membrane. In this context, acts by phosphorylating C2CD5/CDP138 on 'Ser-197' in insulin-stimulated adipocytes. Through the phosphorylation of CLK2 on 'Thr-343', involved in insulin-regulated suppression of hepatic gluconeogenesis. This chain is RAC-beta serine/threonine-protein kinase, found in Homo sapiens (Human).